A 18562-amino-acid chain; its full sequence is Titin homolog (18562 aa).

Positions 90–176 constitute an Ig-like 1 domain; that stretch reads PKFIQVIKAY…GVSTSYGYIT (87 aa). The segment at 384–404 is disordered; it reads RFHPQPPKPPRAGTSRRFLPE. 4 Ig-like domains span residues 406-493, 821-913, 943-1038, and 1135-1225; these read PKFV…TQVT, PKIV…AFIN, PKFI…LTIS, and PRFE…LTVD. A disulfide bridge links Cys842 with Cys897. The interval 1336 to 1360 is disordered; it reads LPPVQKSMSVQEEKASSQRTPSPMN. Residues 1679–1762 form the Ig-like 6 domain; it reads PKFLRKLVNC…ASNVAGTTFS (84 aa). Cys1700 and Cys1751 are oxidised to a cystine. Coiled-coil stretches lie at residues 1766–1786, 2011–2038, and 2065–2085; these read LKLSEADDDAVDLLRQLSEIK, QSLDDQIKVTQQILKDVERDLNKMERTS, and ISDQLADRQSSEEALREALQE. The interval 2155–2177 is disordered; the sequence is RKGSDKDKRKATRIKRVPSAHSA. Basic residues predominate over residues 2163 to 2172; the sequence is RKATRIKRVP. A coiled-coil region spans residues 2205 to 2231; it reads LKQNEEAKEIQELFVKIEKEINTIAEL. Disordered stretches follow at residues 2298–2459 and 2614–2637; these read IIGI…TADA and KSSLKAAEEDEKEGEEEGEEEVTA. A compositionally biased stretch (low complexity) spans 2309 to 2323; it reads RRPSSTPRGSTRSSN. Residues 2324–2341 are compositionally biased toward polar residues; sequence LTTSQDSQATTKMTVSSE. Residues 2606 to 2630 are a coiled coil; sequence LMQTLASEKSSLKAAEEDEKEGEEE. Over residues 2621–2636 the composition is skewed to acidic residues; sequence EEDEKEGEEEGEEEVT. Ig-like domains are found at residues 3095-3177 and 3179-3264; these read KEVM…SGLY and TERS…SFVS. The tract at residues 3362-3692 is disordered; the sequence is EVPKVAEPSE…NAEAQKVVDS (331 aa). Positions 3655–3665 are enriched in acidic residues; sequence SEEETPLEETN. 3 consecutive Ig-like domains span residues 3789–3878, 3897–3985, and 4038–4125; these read PVFT…CEIV, PHFV…CTID, and PPYF…CVLT. 2 cysteine pairs are disulfide-bonded: Cys3919-Cys3969 and Cys4059-Cys4109. 14 disordered regions span residues 4553–4599, 4634–4699, 4750–4814, 4826–4855, 4912–4931, 4950–4969, 4989–5216, 5267–5294, 5306–5325, 5345–5372, 5428–6101, 6127–6157, 6214–6900, and 6930–8453; these read QSRE…SAPT, TVEP…EIVE, GSTA…TSEV, PVPETSAPSVEPTVEKLAPAESKETSEVQP, STAAPAQEPTVEKLAPVESK, PETSAPTVEPTVEKLKPVES, PETS…EILE, GSTAAPAQEPTVEKLAPVESKETSEVEP, PETSAPTVEPTVEKLKSVES, PETSAPTVEPTVEKLAPVDSKETSEVEP, GSTA…VEPT, VQVPETSSPTVEPTVEKLAPVESKETSEVQP, STAA…ETSE, and APVE…DDKL. Basic and acidic residues predominate over residues 4555 to 4577; the sequence is RELDNTERNFTVNKEKDESKKPS. PVET repeat units follow at residues 4599–4626, 4627–4665, 4666–4704, 4755–4787, 4788–4826, 4827–4865, 4917–4948, 4949–4987, 4988–5026, 5027–5065, 5066–5104, 5105–5143, 5144–5182, 5183–5221, 5273–5304, 5305–5343, 5344–5382, 5434–5465, 5466–5504, 5505–5543, 5544–5582, 5583–5621, 5622–5660, 5661–5699, 5700–5738, 5739–5777, 5778–5816, 5817–5855, 5856–5894, 5895–5933, 5934–5972, 5973–6011, 6012–6050, 6051–6089, 6090–6128, 6129–6167, 6219–6250, 6251–6289, 6290–6328, 6329–6367, 6368–6406, 6407–6445, 6446–6484, 6485–6523, 6524–6562, 6563–6601, 6602–6640, 6641–6679, 6680–6718, 6719–6757, 6758–6796, 6797–6835, 6836–6874, 6875–6913, 6914–6952, and 6953–6991; these read TVEKLAPVESKETPEVQAAEIVEQKDVP, VPETRAPTVEPTVEKHTPVDSKETSEVEPAEIVEQKDVP, VPETSAPTVEPTVEKHTPVESKEKSEVQPAEIVEQKDVT, PAQEPTVEKLAPVESKETSEVEPAEIVEQKDVP, VPETSAPSVEPTVEKLAPVESKETSEVQQAEIVEQKDVP, VPETSAPSVEPTVEKLAPAESKETSEVQPAEIVEQKDVT, AQEPTVEKLAPVESKETSEVQQAEIIEQKDVP, VPETSAPTVEPTVEKLKPVESKETSEVQQVEIIEQKDVP, VPETSAPTVEPTVEKLAPVESKETSEVQQAEIIEQKDVP, VPETSAPTVEPTVEKHAPVESKETSEVQPAEIVEQKVVP, VPETSAPTVEPTVEKLAPVESKETPEVQPAEILEQKDVT, AQEPTVEKLAPVESKETSEVEPAEIVEQKDVP, VPETSAPTVEPTVEKLKSVESKETSEVQQAEIIEQKDVP, VPETSAPTVEPTVEKLAPVDSKETSEVEPAEIVEQKDVT, VPETSAPTVEPTVEKLAPVESKETSEVEPAEIVEQKDVP, VPETSAPTVEPTIEKLAPVESKETSEVEPAEIVEQKDVS, VPETSAPTVEPTVEKLAPVESKETSEVQPAEIVEHKDVQ, VPETSSPTVEPTVEKLAPVESKETSEVEPAEIVEQKDVP, VPETSAPTVEPTVEKLAPVESKETSEVQPAEIVEQKDVS, VPETSAPTVEPTVEKLAPVESKETSEVQPAEIVEQKDVP, VPETSAPTVEPTIEKLAPVESKETSEVQPAEIVEHKDVQ, VPETSSPTVEPTVEKLAPVESKETSEVQPAEIVEQKDVT, AHEPTVEKLAPVESKETSEVEPAEIVEQKDVP, VPETSAPTVEPTVEKLAPVESKETSEVEPAEIVEQKDLP, VPETSAPTVEPTVEKLAPVESKKTSEVEPAEIVEQKDVP, VPETTATTFEPTKEKLAPVDSKETSEVQTAEIVEQKDVP, VPETSATTVEPTKEKLAPGESKETSEVQQAAIVEQKDVA, VPETSATTVEPTKEKLAPVESKETSEIQTAEIVEQKDVP, VPETSTSYVEPTKEKLAPGESKETSEVQQAAIVEQKDVP, VPETSATTVEPTKEKLAPVESKETSEIQQAAVVEQKDVP, VPETSATTVEPTKEKLAPVESKETSEVQQAAIVEQKDVP, VPEANAPTFEPTVEKLAPVESKETSEVQQAAIVEQKDVP, and VPEANAPTVEPTVEKLAPVESKETSVESKETQADAKLKK. Basic and acidic residues-rich tracts occupy residues 4638 to 4651 and 4677 to 4691; these read TVEKHTPVDSKETS and TVEKHTPVESKEKSE. Positions 4960–4969 are enriched in basic and acidic residues; sequence TVEKLKPVES. Over residues 5038–5051 the composition is skewed to basic and acidic residues; sequence TVEKLKPVESKETS. Composition is skewed to basic and acidic residues over residues 5116 to 5129 and 5155 to 5168; these read TVEKLKPVESKETS and TVEKHAPVESKETS. Positions 5212 to 5235 form a coiled coil; it reads AEILEQKDVTCEEEIKELLTEVEV. The span at 5316-5325 shows a compositional bias: basic and acidic residues; the sequence is TVEKLKSVES. 2 stretches are compositionally biased toward basic and acidic residues: residues 5477-5490 and 5516-5529; these read TVEKLKSVESKETS and TVEKHAPVESKETS. Composition is skewed to basic and acidic residues over residues 6690–6704, 6729–6743, 6768–6782, 6807–6821, 6846–6860, and 6885–6899; these read PTKEKLAPVDSKETS, PTKEKLAPGESKETS, and PTKEKLAPVESKETS. Basic and acidic residues-rich tracts occupy residues 6972–7606, 7613–7630, 7637–8062, and 8069–8453; these read ESKE…DNFK, LQKEKDDKLKQEKDDNFK, LQKE…DNFK, and LQKE…DDKL. Residues 6984 to 7812 adopt a coiled-coil conformation; sequence QADAKLKKEK…DKLKQETDAK (829 aa). 96 BLUE repeats span residues 6992–6996, 6997–7012, 7013–7028, 7029–7044, 7045–7060, 7061–7076, 7077–7092, 7093–7108, 7109–7124, 7125–7140, 7141–7156, 7157–7172, 7173–7188, 7189–7204, 7205–7220, 7221–7236, 7237–7252, 7253–7268, 7269–7284, 7285–7300, 7301–7316, 7317–7332, 7333–7348, 7349–7364, 7365–7380, 7381–7396, 7397–7412, 7413–7428, 7429–7444, 7445–7460, 7461–7476, 7477–7492, 7493–7508, 7509–7524, 7525–7540, 7541–7556, 7557–7572, 7573–7588, 7589–7604, 7605–7620, 7621–7628, 7629–7644, 7645–7652, 7653–7668, 7669–7684, 7685–7700, 7701–7716, 7717–7732, 7733–7748, 7749–7764, 7765–7772, 7773–7788, 7789–7804, 7805–7820, 7821–7836, 7837–7852, 7853–7868, 7869–7884, 7885–7900, 7901–7916, 7917–7932, 7933–7948, 7949–7964, 7965–7980, 7981–7996, 7997–8012, 8013–8028, 8029–8044, 8045–8060, 8061–8076, 8077–8084, 8085–8100, 8101–8116, 8117–8132, 8133–8148, 8149–8164, 8165–8180, 8181–8196, 8197–8212, 8213–8228, 8229–8244, 8245–8260, 8261–8276, 8277–8292, 8293–8308, 8309–8324, 8325–8340, 8341–8356, 8357–8371, 8373–8388, 8389–8404, 8405–8420, 8421–8436, 8437–8452, 8453–8468, and 8469–8484; these read EKDDK, HKQEADAKLQKENDDK, LKQEADAKLKKENDDK, LKQEAAAKLKKENDDK, LKQEADAKLQKENDDK, LKQEADAKLKKEKHDK, LKQEADAKLQKEKDDK, LKQEADAKLKKEKDDK, LKQDADAKLQKEKDDK, LKHEADAKLQKEKDDK, LKQEADAKLKKEKDDR, LKKDADAKLQKEKDDK, LKHEADAKLKKEKDDK, LKQDADAKLKKEKDDK, LKHEADAKLQKEKDDN, FKQEANAKLQKEKDDK, LKQEKDDN, LKQEKDDK, LKQEADAKLKKDKDDK, LKQEKNDK, LKQETDAKLKKDKDDK, LKQEADGKLKKEKDNK, LKQEANAKLQKEKDDK, LKQEADAKLQKEKDDN, LKQEADAKLKKEKDD, and LKQEADAKLKKEKGDK. A coiled-coil region spans residues 7876–8273; it reads KLKKEKDNKL…EADAKLKKDK (398 aa). Residues 8316–8490 adopt a coiled-coil conformation; the sequence is KLKKEKDNKL…KGDKLKLEDQ (175 aa). The span at 8599-8611 shows a compositional bias: basic residues; the sequence is KHLKKKKKHHKKE. A disordered region spans residues 8599–8626; the sequence is KHLKKKKKHHKKEKIAVKETEQDEKTVS. Residues 8612–8626 are compositionally biased toward basic and acidic residues; the sequence is KIAVKETEQDEKTVS. Residues 8950–9041 enclose the Fibronectin type-III 1 domain; sequence KPRKAQLVAL…EIIEVNTLDY (92 aa). Disordered regions lie at residues 9079-9104, 9147-9436, 9481-9609, 9702-10224, 10239-10274, 10539-11018, 11030-11111, 11123-11213, 11225-11387, 11420-11592, 11624-11825, 11872-11955, 11996-12054, 12397-12418, 12537-12974, 13026-13045, 13065-13261, 13283-13514, 13553-13574, and 13594-13874; these read IEEHRKLKKKSKKSKKTTDEPELDSE, VQKI…AAAE, EEQS…ETES, ADAV…ESRI, ESDDLSTASTIKLQKESDESGIDSRMGQTSEAEDSP, QSAP…DSFT, EDAV…QKDQ, KKLA…QDKT, AKTT…SLTS, KGLN…NPEL, LTKK…SDNL, LSAH…TSLS, TNLI…LQKN, GRRVMEASSDSELDDAKKRKKR, EESR…PAES, EAAKKQKEKDEQLKLETEVV, AAEA…LNDK, QAQA…EQLK, EEKQRLESEAATKKADAEKLKL, and EKLA…RRTG. The segment covering 9084–9093 has biased composition (basic residues); the sequence is KLKKKSKKSK. 2 stretches are compositionally biased toward basic and acidic residues: residues 9172–9184 and 9191–9202; these read VKKDDKDVNKKSL and TKKEIQGKPEKK. A compositionally biased stretch (polar residues) spans 9213 to 9231; the sequence is SSISETSETLTKDLTQTKQ. Residues 9232–9267 are compositionally biased toward basic and acidic residues; sequence SEPEPAKRTTETSVQDEVKRKTETTSKSKQTTEEHP. Residues 9273-9283 are compositionally biased toward low complexity; sequence SDSSISSTSDA. Residues 9295–9332 show a composition bias toward basic and acidic residues; sequence EAQKVTEKPETAKLESKSKMTEDTTKESDNKETVDEKP. Residues 9346 to 9359 are compositionally biased toward low complexity; the sequence is STISETSETSAVES. Residues 9371–9510 adopt a coiled-coil conformation; sequence AAVDKEKKQK…QTKAKAAEKQ (140 aa). 2 stretches are compositionally biased toward basic and acidic residues: residues 9373–9436 and 9481–9521; these read VDKE…AAAE and EEQS…KSNK. Positions 9547 to 9558 are enriched in low complexity; the sequence is SSISQKSDTSKT. The stretch at 9577 to 9749 forms a coiled coil; the sequence is TSKQKETDKK…QTVEEQAKLD (173 aa). Composition is skewed to basic and acidic residues over residues 9578 to 9609 and 9702 to 9783; these read SKQKETDKKQKLEAEITAKKSADEKSKLETES and ADAV…DEKP. A compositionally biased stretch (polar residues) spans 9798–9809; that stretch reads SISQKSVTSKTV. Composition is skewed to basic and acidic residues over residues 9819–10004, 10040–10149, and 10162–10196; these read ETQK…DEKP, ETQK…KSEN, and VKSEPKKSDKTETVEKEVASSTEKSDDSKTKEPKE. Coiled-coil stretches lie at residues 9822 to 9995 and 10046 to 10129; these read KVAD…TEEA and EADK…TSKK. Over residues 10197–10206 the composition is skewed to basic residues; it reads KKKIIKKKKD. Over residues 10207-10224 the composition is skewed to basic and acidic residues; that stretch reads TTKPQEASKELSSDESRI. Residues 10239-10250 show a composition bias toward polar residues; the sequence is ESDDLSTASTIK. The 93-residue stretch at 10461–10553 folds into the Fibronectin type-III 2 domain; it reads KPTSLQVTST…DTIEATTQAE (93 aa). The span at 10566–10609 shows a compositional bias: basic and acidic residues; the sequence is EKVKEPVSKKPENTKESEGHKKRDRKESEDHDENNLGKSGKDEF. The span at 10612-10637 shows a compositional bias: polar residues; it reads SGESGTSNQNEESAQLNTSFTSTEQH. Residues 10663-10680 show a composition bias toward acidic residues; the sequence is IDADVVEVEYDEQGDDIP. Residues 10707–10716 show a composition bias toward basic and acidic residues; sequence MAEKDSDAME. A compositionally biased stretch (polar residues) spans 10779–10790; the sequence is ADQTGMSIQDLN. Basic and acidic residues-rich tracts occupy residues 10840–10852 and 10863–10884; these read QLDKSQEVEDDKM and KKPESREVSGGKSEKSKEKESD. The span at 10961-10975 shows a compositional bias: polar residues; that stretch reads LSTSEQVENASQNLG. Basic and acidic residues-rich tracts occupy residues 10999–11009, 11045–11055, and 11076–11089; these read IHGEAESKLGE, SAEKTSLEVRD, and SNRDETSMEIRDLN. Residues 11018–11064 are a coiled coil; sequence TLQDLYEELKAKEDAVEAGAETSNADQSAEKTSLEVRDMKKKMKKKQ. Over residues 11090-11108 the composition is skewed to polar residues; that stretch reads TQHSNQTGEDESSTFNFGQ. Over residues 11159–11173 the composition is skewed to basic and acidic residues; sequence KKGEENEKTKFEAKH. Residues 11174 to 11187 show a composition bias toward low complexity; it reads LGSSSASDSLAEST. Basic and acidic residues-rich tracts occupy residues 11195-11211, 11271-11280, and 11295-11318; these read KGEVEKSELSIDMKNQD, IPDKNRDSDK, and ESAEAQKNESPEVKEISSFEEKTL. The segment covering 11374-11387 has biased composition (polar residues); it reads SKVTTSFADESLTS. Composition is skewed to basic and acidic residues over residues 11440–11464 and 11472–11485; these read KVKDSDSLSSTDKKIGLKKSDKDQK and GSKDQESVGYEEKT. Positions 11503–11515 are enriched in polar residues; sequence MTDQKNVQESQYA. Basic and acidic residues-rich tracts occupy residues 11624–11635, 11645–11669, and 11722–11735; these read LTKKQDENDAKK, AKKDSDTLSITSKKDKFGKRQDSRE, and VSEKGHDTYSEKTV. Residues 11754-11767 are compositionally biased toward polar residues; it reads ESLNASSALSTTDV. Over residues 11916 to 11937 the composition is skewed to basic and acidic residues; sequence AEDKYVESRKKTTLKKKPEQKQ. The stretch at 12408-12428 forms a coiled coil; sequence ELDDAKKRKKRRIKRVVERRN. The Ig-like 12 domain occupies 12432 to 12547; it reads PRLTQLIPPR…ESRDDDKSVD (116 aa). Composition is skewed to basic and acidic residues over residues 12537–12547, 12555–12567, and 12609–12689; these read EESRDDDKSVD, LEEKKDDGDDKSK, and VGAK…KKDA. Low complexity predominate over residues 12690–12701; that stretch reads SQPSSSKESSPP. The span at 12729-12740 shows a compositional bias: polar residues; that stretch reads TMHSETNITTTI. 3 stretches are compositionally biased toward basic and acidic residues: residues 12766–12839, 12852–12865, and 12889–12940; these read ESAK…KNKS, ETKKDVSEIEEVPK, and PADD…DDKS. A coiled-coil region spans residues 12797–12828; the sequence is KKSEKKDEVTAEKQSTEALIESKKKEVDESKI. Residues 12980–13103 are a coiled coil; sequence AEVNKAKKQK…LKLEEESAAK (124 aa). 7 stretches are compositionally biased toward basic and acidic residues: residues 13065-13124, 13133-13145, 13176-13191, 13203-13261, 13283-13327, 13337-13354, and 13361-13416; these read AAEA…KAGE, PTSKKTIDTKDVG, TDSEKVSKQKEQDEPT, EADK…LNDK, QAQA…EKQA, AVKKQKELDEKNKLEANK, and LKIE…DEKP. A coiled-coil region spans residues 13237–13380; the sequence is LDAQEKIKKV…SKQTVEEQAK (144 aa). Polar residues predominate over residues 13431 to 13442; sequence SISQKSETSKTV. Basic and acidic residues predominate over residues 13452 to 13514; that stretch reads ETQKVADAAR…KQKEKDEQLK (63 aa). Positions 13455 to 13628 form a coiled coil; that stretch reads KVADAARKQK…ETKSKQTEEA (174 aa). The segment covering 13594 to 13637 has biased composition (basic and acidic residues); sequence EKLAQEQSRLEDEAKKSAEKQKLESETKSKQTEEAPKESVDEKP. Residues 13651 to 13662 are compositionally biased toward low complexity; it reads SSISQKSKSAKS. Polar residues predominate over residues 13684-13696; the sequence is KVEQSPDESTSAT. Basic and acidic residues predominate over residues 13697-13735; it reads IKRDPAQKTEEISKQDDGDEKKTTTDGKPPKPEDSEATP. Residues 13747-13760 show a composition bias toward low complexity; the sequence is SDSVASDASLADVS. A compositionally biased stretch (basic and acidic residues) spans 13761 to 13770; sequence KLSDDVEEKP. The segment covering 13784 to 13793 has biased composition (polar residues); the sequence is SVISETSSVD. 2 stretches are compositionally biased toward basic and acidic residues: residues 13795 to 13808 and 13824 to 13843; these read IKPESVEIPTEKAE and SEPKNAHKDDTEKTTDDMMT. Residues 13963 to 14036 form the Ig-like 13 domain; that stretch reads PVDFVKYLPR…RAKYEDSGKY (74 aa). Fibronectin type-III domains are found at residues 14153 to 14247, 14253 to 14348, and 14350 to 14448; these read APGD…TGSP, VEFP…TVEG, and VPEI…VLAD. 3 Ig-like domains span residues 14451–14542, 14550–14634, and 14638–14727; these read PRVL…VGIS, SSFS…VIVN, and PHIL…LVFE. Cys14568 and Cys14618 form a disulfide bridge. Fibronectin type-III domains follow at residues 14826-14920 and 14937-15027; these read APCD…TLES and ILRT…LVPG. The disordered stretch occupies residues 15011–15180; sequence VSSPSEETNP…TGKETTEKKK (170 aa). 2 stretches are compositionally biased toward basic and acidic residues: residues 15034–15060 and 15085–15117; these read KTEKKTDAAKSESEQKSAEEIVAEKQV and KVAENKGEETLQEVKEKLKKGKAVEKVQDESRR. Residues 15118 to 15132 are compositionally biased toward polar residues; it reads GSLQASSDNESVTTT. The segment covering 15133–15177 has biased composition (basic and acidic residues); it reads SEKRSEAELEKNSEKSAEKKSTSADLEAADKAETEKSETGKETTE. Ig-like domains are found at residues 15180–15274 and 15283–15371; these read KKVV…VSIA and PKVE…IALR. Fibronectin type-III domains follow at residues 15383–15475 and 15503–15596; these read PTGP…LKKK and QIGK…TTES. The interval 15470–15503 is disordered; that stretch reads TTLKKKEETGKQKSEKSESDEKKSESDKVSELKQ. Basic and acidic residues predominate over residues 15473–15503; the sequence is KKKEETGKQKSEKSESDEKKSESDKVSELKQ. 2 Ig-like domains span residues 15599–15687 and 15692–15786; these read PAFT…CKLT and PEIN…IQVT. A Fibronectin type-III 10 domain is found at 15791 to 15883; sequence APGKPAVEDQ…DESELVVVKN (93 aa). Positions 15934–16189 constitute a Protein kinase domain; it reads YIIHEELGKG…VQDALRHPWI (256 aa). ATP-binding positions include 15940–15948 and Lys15963; that span reads LGKGAYGTV. Residue Asp16055 is the Proton acceptor of the active site. An autoinhibitory domain region spans residues 16206–16264; that stretch reads KMQPKLDKSGVPARQKRNFLSLKRWSDDLLPIGRLAKRGAIFRRLTMDGVFERNIAFDT. Ig-like domains are found at residues 16268–16358, 16500–16575, 16605–16692, and 16705–16789; these read PSVK…AKLS, GKQL…VAKN, PRFR…FSVV, and PKFL…KDFT. Intrachain disulfides connect Cys16290–Cys16342, Cys16508–Cys16571, Cys16627–Cys16677, and Cys16726–Cys16778. The interval 16805–16827 is disordered; it reads LTPVRSRSRSRSRSPSVVGGEIQ. 3 Ig-like domains span residues 16829-16918, 16932-17025, and 17037-17126; these read PPVV…AIVV, PTFV…LTIS, and PYFI…TEVS. Residues 17121 to 17169 form a disordered region; that stretch reads QNTEVSVTKSKEVKEKKEKKKVEKKDEGKKKPGRPGLPRPSGASKTEQV. Over residues 17129 to 17150 the composition is skewed to basic and acidic residues; it reads KSKEVKEKKEKKKVEKKDEGKK. Positions 17154–17245 constitute a Fibronectin type-III 11 domain; sequence RPGLPRPSGA…MTSTLKTASV (92 aa). Ig-like domains lie at 17249–17336, 17358–17447, 17457–17548, 17570–17661, 17676–17765, 17782–17873, 18008–18097, 18121–18213, 18224–18316, 18329–18417, and 18429–18519; these read PQFT…CQVT, PTLQ…CNVA, PSFS…VMIA, PRFT…TQVI, PKFT…QATT, PRFV…LNVS, PKFM…SEID, PNFI…LQVS, PPLF…MQLD, PRVF…LELT, and PKFN…MILS. 2 cysteine pairs are disulfide-bonded: Cys17379-Cys17431 and Cys17478-Cys17530. Cys17697 and Cys17754 are oxidised to a cystine. Cys18143 and Cys18195 are joined by a disulfide.

It belongs to the protein kinase superfamily. CAMK Ser/Thr protein kinase family. As to quaternary structure, interacts (via C-terminus) with myosin. Interacts with actin. Mg(2+) is required as a cofactor. As to expression, expression is restricted to body wall, enteric and vulval muscles.

The protein resides in the cytoplasm. The protein localises to the myofibril. Its subcellular location is the sarcomere. It is found in the a band. It localises to the i band. The protein resides in the nucleus membrane. It catalyses the reaction L-seryl-[protein] + ATP = O-phospho-L-seryl-[protein] + ADP + H(+). It carries out the reaction L-threonyl-[protein] + ATP = O-phospho-L-threonyl-[protein] + ADP + H(+). Serine/threonine-protein kinase. Key component in the assembly and functioning of muscles. By providing connections at the level of individual microfilaments, it contributes to the fine balance of forces between the two halves of the sarcomere. The size and extensibility of the cross-links are the main determinants of sarcomere extensibility properties of muscle. In non-muscle cells, seems to play a role in chromosome condensation and chromosome segregation during mitosis. Might link the lamina network to chromatin or nuclear actin, or both during interphase. The protein is Titin homolog of Caenorhabditis elegans.